The chain runs to 810 residues: Myoneurin (810 aa).

In terms of domain architecture, BTB spans 24–91; it reads CDCTVSIGQA…IYTGDLNMDR (68 aa). Disordered regions lie at residues 122–146 and 169–466; these read NVGS…DYEP and VSMD…VKPV. Positions 173–183 are enriched in polar residues; it reads EAQSSSEQTPQ. Basic residues-rich tracts occupy residues 185 to 194 and 211 to 225; these read VGKRGRKPKT and GRGR…RPRV. Residues 229 to 238 show a composition bias toward polar residues; the sequence is SSDSTDQSPA. Residues 243–253 are compositionally biased toward low complexity; the sequence is SPNGSSTSRGS. The a.T hook 1 DNA-binding region spans 254–266; that stretch reads GRPRGRPRVRPLS. Residues 270–308 are compositionally biased toward basic and acidic residues; the sequence is EDPRNVEDDPAANKDQEVEKGNEEQKKETGEKDDGKNDT. A DNA-binding region (a.T hook 2) is located at residues 318–330; the sequence is KRGRGRPRIKPVS. Residues 331–346 are compositionally biased toward polar residues; that stretch reads TEDQTTNSENVTTNAE. Positions 350-361 are enriched in basic and acidic residues; sequence EPAKTKDSEGTG. Residues 361 to 373 constitute a DNA-binding region (a.T hook 3); the sequence is GRKRGRPRSKPVS. Acidic residues predominate over residues 386–396; sequence SGEEAGEETSQ. The segment covering 419 to 428 has biased composition (basic residues); sequence ISKRKRILSR. The Nuclear localization signal motif lies at 428-432; that stretch reads RKLKE. Acidic residues predominate over residues 435–460; sequence AGDEEEEEEEEMDDEFENDNEDWAGE. C2H2-type zinc fingers lie at residues 472–494, 500–522, 528–551, 557–579, 585–607, 613–635, and 641–663; these read PICN…MRIH, YQCT…MRIH, FTCT…RMHH, YKCE…IRKH, YECG…KRRH, YICD…NRKH, and YICL…MDVH.

This sequence belongs to the krueppel C2H2-type zinc-finger protein family.

It localises to the nucleus. This chain is Myoneurin (mynn), found in Danio rerio (Zebrafish).